The primary structure comprises 504 residues: GTPase Der (504 aa).

The 165-residue stretch at 4–168 folds into the EngA-type G 1 domain; it reads PVVALVGRPN…QVLAPFAEKM (165 aa). GTP-binding positions include 10–17, 57–61, and 120–123; these read GRPNVGKS, DTGGI, and NKTD. Basic and acidic residues predominate over residues 168-179; sequence MENADENDRTSE. Residues 168–191 are disordered; the sequence is MENADENDRTSEEEQDEWEQEFDF. Residues 180-191 show a composition bias toward acidic residues; the sequence is EEQDEWEQEFDF. One can recognise an EngA-type G 2 domain in the interval 216–389; that stretch reads IKIAIVGRPN…SIKEAYACAT (174 aa). GTP-binding positions include 222 to 229, 269 to 273, and 334 to 337; these read GRPNVGKS, DTAGV, and NKWD. In terms of domain architecture, KH-like spans 390 to 474; that stretch reads QKMTTSLLTR…PIRLLFQEGS (85 aa).

The protein belongs to the TRAFAC class TrmE-Era-EngA-EngB-Septin-like GTPase superfamily. EngA (Der) GTPase family. As to quaternary structure, associates with the 50S ribosomal subunit.

Functionally, GTPase that plays an essential role in the late steps of ribosome biogenesis. The chain is GTPase Der from Haemophilus influenzae (strain ATCC 51907 / DSM 11121 / KW20 / Rd).